The following is a 70-amino-acid chain: MCNRNVITIPYEEDMSKYSILHQVGGRIEYFQKEYSQYPMFAFDSEEDYNEYKCLIMQLKKNKKVSSFSF.

This Bacillus subtilis (strain 168) protein is SPbeta prophage-derived uncharacterized protein YotJ (yotJ).